The following is a 944-amino-acid chain: Protein phosphatase 1 regulatory subunit 37 homolog (944 aa).

A disordered region spans residues 42–71 (QQQSHSAATSVRKKTCQDANSSGEDPNGRI). LRR repeat units follow at residues 203–224 (SCVR…TTIF), 232–255 (SLQM…CKMA), 262–282 (SLTC…LVLI), 290–311 (GLRE…HIYQ), and 318–338 (SLQL…RHIC). The disordered stretch occupies residues 517 to 598 (EEGDSGVEKK…KERHQRFVRS (82 aa)). Positions 522-542 (GVEKKDGNECEGEDNKDRQDT) are enriched in basic and acidic residues. 2 stretches are compositionally biased toward polar residues: residues 543-554 (PAETENGVSSNE) and 567-585 (PESN…STSK). Positions 586 to 595 (LSRKERHQRF) are enriched in basic residues.

It belongs to the PPP1R37 family.

The polypeptide is Protein phosphatase 1 regulatory subunit 37 homolog (Caenorhabditis elegans).